Consider the following 510-residue polypeptide: MDPLQAVHLGPRKKRPRQLGTPVASTPYDIRFRDLVLFILEKKMGTTRRAFLMELARRKGFRVENELSDSVTHIVAENNSGSDVLEWLQLQNIKASSELELLDISWLIECMGAGKPVEMMGRHQLVVNRNSSPSPVPGSQNVPAPAVKKISQYACQRRTTLNNYNQLFTDALDILAENDELRENEGSCLAFMRASSVLKSLPFPITSMKDTEGIPCLGDKVKSIIEGIIEDGESSEAKAVLNDERYKSFKLFTSVFGVGLKTAEKWFRMGFRTLSKIQSDKSLRFTQMQKAGFLYYEDLVSCVNRPEAEAVSMLVKEAVVTFLPDALVTMTGGFRRGKMTGHDVDFLITSPEATEDEEQQLLHKVTDFWKQQGLLLYCDILESTFEKFKQPSRKVDALDHFQKCFLILKLDHGRVHSEKSGQQEGKGWKAIRVDLVMCPYDRRAFALLGWTGSRQFERDLRRYATHERKMMLDNHALYDRTKRVFLEAESEEEIFAHLGLDYIEPWERNA.

Residues 1–22 (MDPLQAVHLGPRKKRPRQLGTP) form a disordered region. The Nuclear localization signal signature appears at 11–17 (PRKKRPR). The region spanning 27–124 (PYDIRFRDLV…KPVEMMGRHQ (98 aa)) is the BRCT domain. The residue at position 134 (Ser-134) is a Phosphoserine. Positions 151-510 (SQYACQRRTT…DYIEPWERNA (360 aa)) are mediates interaction with DNTTIP2. Residues 258 to 262 (VGLKT) are involved in DNA binding. A 2'-deoxyribonucleoside 5'-triphosphate-binding positions include 333–338 (GFRRGK) and 342–345 (HDVD). Mg(2+) contacts are provided by Asp-343, Asp-345, and Asp-434. 449–450 (GW) provides a ligand contact to a 2'-deoxyribonucleoside 5'-triphosphate.

It belongs to the DNA polymerase type-X family. In terms of assembly, interacts with PRP19 and DNTTIP1. Forms a ternary complex with DNTTIP2 and core histone. Released from this complex by PCNA. Interacts with TRERF1. Requires Mg(2+) as cofactor. In terms of tissue distribution, isoform TDT-L: Expressed in the thymus, and, at lower levels, in the bone marrow. Detected in both cycling and noncycling pro-B and pre-B cells (at protein level). Isoform TDT-S: Expressed in both cycling and noncycling pro-B, but not pre-B, cells (at protein level). Not detected in mature peripheral or germinal center B cells.

It localises to the nucleus. It is found in the cytoplasm. The catalysed reaction is DNA(n) + a 2'-deoxyribonucleoside 5'-triphosphate = DNA(n+1) + diphosphate. Transferase that catalyzes the nontemplated addition of nucleoside triphosphate to coding ends during V(D)J recombination (N addition). Involved in the generation of diversity in the antigen-binding region of immunoglobulin heavy and light chains and T-cell receptors during B- and T-cell development. Does not act on double-stranded DNA with blunt ends. In terms of biological role, 3'-to-5' DNA exonuclease. Involved in the generation of diversity in the antigen-binding region of immunoglobulin heavy and light chains and T-cell receptors during B- and T-cell development. Acts on single-stranded and double-stranded DNA with 3' or 5' extensions, but not on double-stranded DNA with blunt ends. Attenuates not only isoform TDT-S-catalyzed N addition, but also P (palindromic) addition in coding joins. Lacks terminal transferase activity. The protein is DNA nucleotidylexotransferase (Dntt) of Mus musculus (Mouse).